A 202-amino-acid chain; its full sequence is Imidazoleglycerol-phosphate dehydratase (202 aa).

Belongs to the imidazoleglycerol-phosphate dehydratase family.

Its subcellular location is the cytoplasm. The catalysed reaction is D-erythro-1-(imidazol-4-yl)glycerol 3-phosphate = 3-(imidazol-4-yl)-2-oxopropyl phosphate + H2O. Its pathway is amino-acid biosynthesis; L-histidine biosynthesis; L-histidine from 5-phospho-alpha-D-ribose 1-diphosphate: step 6/9. This chain is Imidazoleglycerol-phosphate dehydratase, found in Brucella anthropi (strain ATCC 49188 / DSM 6882 / CCUG 24695 / JCM 21032 / LMG 3331 / NBRC 15819 / NCTC 12168 / Alc 37) (Ochrobactrum anthropi).